The primary structure comprises 434 residues: MSILKIHAREIFDSRGNPTVEVDLFTSKGLFRAAVPSGASTGIYEALELRDNDKTRYMGKGVSKAVEHINKTIAPALVSKKLNVTEQEKIDKLMIEMDGTENKSKFGANAILGVSLAVCKAGAVEKGVPLYRHIADLAGNSEVILPVPAFNVINGGSHAGNKLAMQEFMILPVGAANFREAMRIGAEVYHNLKNVIKEKYGKDATNVGDEGGFAPNILENKEGLELLKTAIGKAGYTDKVVIGMDVAASEFFRSGKYDLDFKSPDDPSRYISPDQLADLYKSFIKDYPVVSIEDPFDQDDWGAWQKFTASAGIQVVGDDLTVTNPKRIAKAVNEKSCNCLLLKVNQIGSVTESLQACKLAQANGWGVMVSHRSGETEDTFIADLVVGLCTGQIKTGAPCRSERLAKYNQLLRIEEELGSKAKFAGRNFRNPLAK.

At Ser-2 the chain carries N-acetylserine. At Lys-5 the chain carries N6-acetyllysine. Ser-27 is modified (phosphoserine). Residues 31-38 are epitope recognized by CAR and healthy patient antibodies; it reads FRAAVPSG. Ser-40 lines the Mg(2+) pocket. Tyr-44 is modified (phosphotyrosine). The segment at 56 to 63 is epitope recognized by CAR antibodies; it reads RYMGKGVS. Lys-60 carries the N6-acetyllysine; alternate modification. N6-succinyllysine; alternate is present on Lys-60. Lys-64 and Lys-71 each carry N6-acetyllysine. The residue at position 89 (Lys-89) is an N6-acetyllysine; alternate. Position 89 is an N6-succinyllysine; alternate (Lys-89). Lys-92 and Lys-126 each carry N6-acetyllysine. Residues 97 to 237 are required for repression of c-myc promoter activity; it reads MDGTENKSKF…KTAIGKAGYT (141 aa). The substrate site is built by His-158 and Glu-167. An N6-acetyllysine mark is found at Lys-193 and Lys-199. An N6-acetyllysine; alternate modification is found at Lys-202. A Glycyl lysine isopeptide (Lys-Gly) (interchain with G-Cter in SUMO2); alternate cross-link involves residue Lys-202. Glu-210 serves as the catalytic Proton donor. N6-acetyllysine; alternate occurs at positions 228 and 233. At Lys-228 the chain carries N6-succinyllysine; alternate. Lys-228 bears the N6-(2-hydroxyisobutyryl)lysine; alternate mark. Lys-233 bears the N6-malonyllysine; alternate mark. Asp-245 lines the Mg(2+) pocket. Residue Ser-254 is modified to Phosphoserine. The residue at position 256 (Lys-256) is an N6-acetyllysine. A phosphoserine mark is found at Ser-263 and Ser-272. Lys-281 carries the post-translational modification N6-acetyllysine; alternate. Position 281 is an N6-(2-hydroxyisobutyryl)lysine; alternate (Lys-281). Lys-285 carries the N6-acetyllysine modification. Tyr-287 carries the post-translational modification Phosphotyrosine. At Ser-291 the chain carries Phosphoserine. Mg(2+) contacts are provided by Glu-293 and Asp-318. Glu-293 and Asp-318 together coordinate substrate. Residues Lys-335 and Lys-343 each carry the N6-acetyllysine modification. The Proton acceptor role is filled by Lys-343. Substrate-binding positions include 370–373 and Lys-394; that span reads SHRS. The tract at residues 405 to 434 is required for interaction with PLG; that stretch reads AKYNQLLRIEEELGSKAKFAGRNFRNPLAK. Lys-406 is subject to N6-acetyllysine. The residue at position 420 (Lys-420) is an N6-acetyllysine; alternate. Lys-420 carries the N6-succinyllysine; alternate modification. Lys-420 carries the post-translational modification N6-malonyllysine; alternate.

The protein belongs to the enolase family. Mammalian enolase is composed of 3 isozyme subunits, alpha, beta and gamma, which can form homodimers or heterodimers which are cell-type and development-specific. ENO1 interacts with PLG in the neuronal plasma membrane and promotes its activation. The C-terminal lysine is required for this binding. Isoform MBP-1 interacts with TRAPPC2B. Interacts with ENO4 and PGAM2. Interacts with CMTM6. It depends on Mg(2+) as a cofactor. In terms of processing, ISGylated. Post-translationally, lysine 2-hydroxyisobutyrylation (Khib) by p300/EP300 activates the phosphopyruvate hydratase activity. As to expression, the alpha/alpha homodimer is expressed in embryo and in most adult tissues. The alpha/beta heterodimer and the beta/beta homodimer are found in striated muscle, and the alpha/gamma heterodimer and the gamma/gamma homodimer in neurons.

The protein resides in the cytoplasm. It localises to the cell membrane. Its subcellular location is the myofibril. It is found in the sarcomere. The protein localises to the m line. The protein resides in the nucleus. It carries out the reaction (2R)-2-phosphoglycerate = phosphoenolpyruvate + H2O. Its pathway is carbohydrate degradation; glycolysis; pyruvate from D-glyceraldehyde 3-phosphate: step 4/5. In terms of biological role, glycolytic enzyme the catalyzes the conversion of 2-phosphoglycerate to phosphoenolpyruvate. In addition to glycolysis, involved in various processes such as growth control, hypoxia tolerance and allergic responses. May also function in the intravascular and pericellular fibrinolytic system due to its ability to serve as a receptor and activator of plasminogen on the cell surface of several cell-types such as leukocytes and neurons. Stimulates immunoglobulin production. Binds to the myc promoter and acts as a transcriptional repressor. May be a tumor suppressor. This chain is Alpha-enolase (ENO1), found in Homo sapiens (Human).